Consider the following 529-residue polypeptide: T-complex protein 1 subunit delta (529 aa).

Belongs to the TCP-1 chaperonin family. As to quaternary structure, heterooligomeric complex of about 850 to 900 kDa that forms two stacked rings, 12 to 16 nm in diameter.

It is found in the cytoplasm. In terms of biological role, molecular chaperone; assists the folding of proteins upon ATP hydrolysis. Known to play a role, in vitro, in the folding of actin and tubulin. The sequence is that of T-complex protein 1 subunit delta (CCT4) from Eremothecium gossypii (strain ATCC 10895 / CBS 109.51 / FGSC 9923 / NRRL Y-1056) (Yeast).